Here is a 185-residue protein sequence, read N- to C-terminus: Photosystem I assembly protein Ycf4 (185 aa).

The next 2 membrane-spanning stretches (helical) occupy residues 21-43 (NFFWACILFLGSLGFLAVGASSY) and 63-85 (GVVMSFYGIAGLFISSYLWCTIL).

Belongs to the Ycf4 family.

It localises to the plastid. It is found in the chloroplast thylakoid membrane. Its function is as follows. Seems to be required for the assembly of the photosystem I complex. In Saccharum hybrid (Sugarcane), this protein is Photosystem I assembly protein Ycf4.